A 70-amino-acid chain; its full sequence is Conotoxin ArMKLT2-0112 (70 aa).

A signal peptide spans 1–22 (MKLTCVLIIAVLFLTACQLTTG). Residues 23 to 40 (EQKDHALRSTDKNSKLTR) constitute a propeptide that is removed on maturation. Glutamine 41 is subject to Pyrrolidone carboxylic acid. Cystine bridges form between cysteine 42-cysteine 56, cysteine 49-cysteine 60, and cysteine 55-cysteine 67.

This sequence belongs to the conotoxin O1 superfamily. Expressed by the venom duct.

It localises to the secreted. This Conus arenatus (Sand-dusted cone) protein is Conotoxin ArMKLT2-0112.